A 322-amino-acid polypeptide reads, in one-letter code: Homoserine kinase (322 aa).

Position 107-117 (107-117) interacts with ATP; the sequence is PLSSGMGGSAA.

This sequence belongs to the GHMP kinase family. Homoserine kinase subfamily.

The protein localises to the cytoplasm. It catalyses the reaction L-homoserine + ATP = O-phospho-L-homoserine + ADP + H(+). The protein operates within amino-acid biosynthesis; L-threonine biosynthesis; L-threonine from L-aspartate: step 4/5. Functionally, catalyzes the ATP-dependent phosphorylation of L-homoserine to L-homoserine phosphate. This chain is Homoserine kinase, found in Xylella fastidiosa (strain M23).